Reading from the N-terminus, the 465-residue chain is 23S rRNA (uracil(1939)-C(5))-methyltransferase RlmD (465 aa).

A disordered region spans residues 1 to 24; it reads MSEAVPLSTRRASSAGDAPGRAPV. Residues 16–80 enclose the TRAM domain; that stretch reads GDAPGRAPVL…PTYEQAQVVD (65 aa). Residues Cys-93, Cys-99, Cys-102, and Cys-181 each coordinate [4Fe-4S] cluster. Positions 289, 318, 323, 339, 367, and 388 each coordinate S-adenosyl-L-methionine. Cys-421 serves as the catalytic Nucleophile.

Belongs to the class I-like SAM-binding methyltransferase superfamily. RNA M5U methyltransferase family. RlmD subfamily.

It carries out the reaction uridine(1939) in 23S rRNA + S-adenosyl-L-methionine = 5-methyluridine(1939) in 23S rRNA + S-adenosyl-L-homocysteine + H(+). Catalyzes the formation of 5-methyl-uridine at position 1939 (m5U1939) in 23S rRNA. In Burkholderia mallei (strain ATCC 23344), this protein is 23S rRNA (uracil(1939)-C(5))-methyltransferase RlmD.